The primary structure comprises 226 residues: MDIILASGSPRRRELLSRVQLEFTVISVDIDETPYQDESPEDYIVRMVAAKAEAATVQLNRQLKNNDAHIYQSLLSKPIILLTSDTIGVLPDGKTVLVKPNNREDAYRMWQQMSDSTHEVWTAVQATQLSLQPKRSDEFNNEQVWQIINQQQIIERTEVTFVALTLEMMSDYWDSGEPADKAGGYGIQGLGAAWVSRINGSYTNVVGLPLAQTLALIKEMNDTDTL.

The active-site Proton acceptor is D85.

This sequence belongs to the Maf family. YhdE subfamily. It depends on a divalent metal cation as a cofactor.

It is found in the cytoplasm. The enzyme catalyses dTTP + H2O = dTMP + diphosphate + H(+). It carries out the reaction UTP + H2O = UMP + diphosphate + H(+). Functionally, nucleoside triphosphate pyrophosphatase that hydrolyzes dTTP and UTP. May have a dual role in cell division arrest and in preventing the incorporation of modified nucleotides into cellular nucleic acids. The chain is dTTP/UTP pyrophosphatase from Psychrobacter cryohalolentis (strain ATCC BAA-1226 / DSM 17306 / VKM B-2378 / K5).